The following is a 300-amino-acid chain: 4-hydroxy-tetrahydrodipicolinate synthase (300 aa).

A pyruvate-binding site is contributed by Thr55. Catalysis depends on Tyr143, which acts as the Proton donor/acceptor. Residue Lys171 is the Schiff-base intermediate with substrate of the active site. Residue Ile211 participates in pyruvate binding.

This sequence belongs to the DapA family. Homotetramer; dimer of dimers.

It localises to the cytoplasm. It carries out the reaction L-aspartate 4-semialdehyde + pyruvate = (2S,4S)-4-hydroxy-2,3,4,5-tetrahydrodipicolinate + H2O + H(+). The protein operates within amino-acid biosynthesis; L-lysine biosynthesis via DAP pathway; (S)-tetrahydrodipicolinate from L-aspartate: step 3/4. In terms of biological role, catalyzes the condensation of (S)-aspartate-beta-semialdehyde [(S)-ASA] and pyruvate to 4-hydroxy-tetrahydrodipicolinate (HTPA). The sequence is that of 4-hydroxy-tetrahydrodipicolinate synthase from Mycobacterium bovis (strain ATCC BAA-935 / AF2122/97).